Reading from the N-terminus, the 484-residue chain is MKFKQDYFDQLSGFYSQVTPQGLPRPQWLAWSEDAAALIGLKQPDDELLQGLAGNQAIPGASYYAQVYSGHQFGGYSPQLGDGRSIILGEAEGPQGYWDVALKGAGMTPYSRHGDGRAVMRSAVREFLVSEALHHLNIPTTRALAVIGSDLPVWRETQETAAITVRLAKSHIRFGHFEFFCHSEQGSKDKLKQLLDFTLSQHYPELSRDQAGYIAWFNRVVADTAKLIAHWQAVGFAHGVMNTDNMSILGDSFDFGPFAFLDTFEEDFICNHSDPNGRYAFGQQPGVGLWNLQRLAQALVPIIASDDLIAALNTYQHHLVQAYLVLMRDKLGIKLVEPAGSERDEADLQLIGGFTLLMEANRLDHTNTWRRFAQLDPNSQHSSLRDDFIDLAGFDTWYQAYQERLGQVSDVAGWQAVRAQVNPKYVLRNYLAQEAIIACEEGNTQPLAELHQLLTRPFDEQPEKEAYAKRPPEWGQGLIMSCSS.

ATP-binding residues include G81, G83, R84, K103, D115, G116, R166, and R173. Residue D244 is the Proton acceptor of the active site. Positions 245 and 254 each coordinate Mg(2+). D254 lines the ATP pocket.

This sequence belongs to the SELO family. The cofactor is Mg(2+). Requires Mn(2+) as cofactor.

The catalysed reaction is L-seryl-[protein] + ATP = 3-O-(5'-adenylyl)-L-seryl-[protein] + diphosphate. It carries out the reaction L-threonyl-[protein] + ATP = 3-O-(5'-adenylyl)-L-threonyl-[protein] + diphosphate. The enzyme catalyses L-tyrosyl-[protein] + ATP = O-(5'-adenylyl)-L-tyrosyl-[protein] + diphosphate. It catalyses the reaction L-histidyl-[protein] + UTP = N(tele)-(5'-uridylyl)-L-histidyl-[protein] + diphosphate. The catalysed reaction is L-seryl-[protein] + UTP = O-(5'-uridylyl)-L-seryl-[protein] + diphosphate. It carries out the reaction L-tyrosyl-[protein] + UTP = O-(5'-uridylyl)-L-tyrosyl-[protein] + diphosphate. Its function is as follows. Nucleotidyltransferase involved in the post-translational modification of proteins. It can catalyze the addition of adenosine monophosphate (AMP) or uridine monophosphate (UMP) to a protein, resulting in modifications known as AMPylation and UMPylation. This Shewanella loihica (strain ATCC BAA-1088 / PV-4) protein is Protein nucleotidyltransferase YdiU.